A 262-amino-acid chain; its full sequence is Acyl-[acyl-carrier-protein]--UDP-N-acetylglucosamine O-acyltransferase (262 aa).

Belongs to the transferase hexapeptide repeat family. LpxA subfamily. As to quaternary structure, homotrimer.

The protein localises to the cytoplasm. The enzyme catalyses a (3R)-hydroxyacyl-[ACP] + UDP-N-acetyl-alpha-D-glucosamine = a UDP-3-O-[(3R)-3-hydroxyacyl]-N-acetyl-alpha-D-glucosamine + holo-[ACP]. It participates in glycolipid biosynthesis; lipid IV(A) biosynthesis; lipid IV(A) from (3R)-3-hydroxytetradecanoyl-[acyl-carrier-protein] and UDP-N-acetyl-alpha-D-glucosamine: step 1/6. In terms of biological role, involved in the biosynthesis of lipid A, a phosphorylated glycolipid that anchors the lipopolysaccharide to the outer membrane of the cell. This chain is Acyl-[acyl-carrier-protein]--UDP-N-acetylglucosamine O-acyltransferase, found in Pectobacterium carotovorum subsp. carotovorum (strain PC1).